The primary structure comprises 88 residues: RNA-binding protein Hfq (88 aa).

The 60-residue stretch at 9–68 (DPFLNALRCERIPVSIYLVNGIKLQGQIESFDQFVILLKNTVNQMVYKHAISTVVPARAV) folds into the Sm domain. Positions 66–88 (RAVSHHTASDRPQGERPQETTEE) are disordered. A compositionally biased stretch (basic and acidic residues) spans 72–88 (TASDRPQGERPQETTEE).

Belongs to the Hfq family. In terms of assembly, homohexamer.

RNA chaperone that binds small regulatory RNA (sRNAs) and mRNAs to facilitate mRNA translational regulation in response to envelope stress, environmental stress and changes in metabolite concentrations. Also binds with high specificity to tRNAs. The chain is RNA-binding protein Hfq from Aliivibrio salmonicida (strain LFI1238) (Vibrio salmonicida (strain LFI1238)).